The sequence spans 207 residues: Thiamine-phosphate synthase (207 aa).

4-amino-2-methyl-5-(diphosphooxymethyl)pyrimidine is bound by residues 38 to 42 and Asn70; that span reads QYRAK. Residues Asp71 and Asp90 each contribute to the Mg(2+) site. Position 109 (Thr109) interacts with 4-amino-2-methyl-5-(diphosphooxymethyl)pyrimidine. Residue 135 to 137 coordinates 2-[(2R,5Z)-2-carboxy-4-methylthiazol-5(2H)-ylidene]ethyl phosphate; the sequence is TNS. Lys138 lines the 4-amino-2-methyl-5-(diphosphooxymethyl)pyrimidine pocket. Residues Gly165 and 185 to 186 contribute to the 2-[(2R,5Z)-2-carboxy-4-methylthiazol-5(2H)-ylidene]ethyl phosphate site; that span reads IS.

Belongs to the thiamine-phosphate synthase family. Requires Mg(2+) as cofactor.

It catalyses the reaction 2-[(2R,5Z)-2-carboxy-4-methylthiazol-5(2H)-ylidene]ethyl phosphate + 4-amino-2-methyl-5-(diphosphooxymethyl)pyrimidine + 2 H(+) = thiamine phosphate + CO2 + diphosphate. It carries out the reaction 2-(2-carboxy-4-methylthiazol-5-yl)ethyl phosphate + 4-amino-2-methyl-5-(diphosphooxymethyl)pyrimidine + 2 H(+) = thiamine phosphate + CO2 + diphosphate. The catalysed reaction is 4-methyl-5-(2-phosphooxyethyl)-thiazole + 4-amino-2-methyl-5-(diphosphooxymethyl)pyrimidine + H(+) = thiamine phosphate + diphosphate. The protein operates within cofactor biosynthesis; thiamine diphosphate biosynthesis; thiamine phosphate from 4-amino-2-methyl-5-diphosphomethylpyrimidine and 4-methyl-5-(2-phosphoethyl)-thiazole: step 1/1. Condenses 4-methyl-5-(beta-hydroxyethyl)thiazole monophosphate (THZ-P) and 2-methyl-4-amino-5-hydroxymethyl pyrimidine pyrophosphate (HMP-PP) to form thiamine monophosphate (TMP). The chain is Thiamine-phosphate synthase from Clostridium perfringens (strain SM101 / Type A).